The following is a 155-amino-acid chain: Urease accessory protein UreE (155 aa).

The protein belongs to the UreE family.

Its subcellular location is the cytoplasm. Its function is as follows. Involved in urease metallocenter assembly. Binds nickel. Probably functions as a nickel donor during metallocenter assembly. This chain is Urease accessory protein UreE, found in Synechococcus sp. (strain CC9311).